A 336-amino-acid polypeptide reads, in one-letter code: MEENMNLKYLLLFVYFVQVLNCCYGHGDPLSYELDRGPKCPFNSDTVSIIIETRENRNRDLYTLQTLQNHPEFKKKTITRPVVFITHGFTSSASETNFINLAKALVDKDNYMVISIDWQTAACTNEAAGLKYLYYPTAARNTRLVGQYIATITQKLVKHYKISMANIRLIGHSLGAHASGFAGKKVQELKLGKYSEIIGLDPARPSFDSNHCSERLCETDAEYVQIIHTSNYLGTEKTLGTVDFYMNNGKNQPGCGRFFSEVCSHSRAVIYMAECIKHECCLIGIPKSKSSQPISSCTKQECVCVGLNAKKYPSRGSFYVPVESTAPFCNNKGKII.

The first 27 residues, 1–27 (MEENMNLKYLLLFVYFVQVLNCCYGHG), serve as a signal peptide directing secretion. Positions 28-36 (DPLSYELDR) are excised as a propeptide. The cysteines at positions 40 and 123 are disulfide-linked. The active-site Nucleophile is the Ser173. The active-site Charge relay system is the Asp201. Intrachain disulfides connect Cys212/Cys217 and Cys255/Cys263. His265 (charge relay system) is an active-site residue. Cystine bridges form between Cys280–Cys304, Cys281–Cys329, and Cys297–Cys302.

Belongs to the AB hydrolase superfamily. Lipase family. In terms of tissue distribution, expressed by the venom gland.

Its subcellular location is the secreted. The enzyme catalyses a 1,2-diacyl-sn-glycero-3-phosphocholine + H2O = a 2-acyl-sn-glycero-3-phosphocholine + a fatty acid + H(+). Its function is as follows. Catalyzes the hydrolysis of phosphatidylcholine with phospholipase A1 activity. Induces hemolytic activity. Acts as an allergen. In Vespula vulgaris (Yellow jacket), this protein is Phospholipase A1.